A 342-amino-acid chain; its full sequence is MNFDQKGLKKRSITVAYFFEHIQKRFDIKFRRLNELDEQKCRIHERDLHRPGLAIAGFTKLFTYKRVQILGNTETRYLNHLSDEERKTAFANFVSFRMPCIILTSNNKLDQELVDMATGAGIPVFITRCSSTKTIYYITDFLDEEFSLYQQYHGSMIDVYGVGVLLTGKSGLGKSEVALDLIERGHGLVADDVVVVKRKGETKTLVASRNNIIDHFMEIRGLGVVDVRQNFGIRAIRDRKEVQVVVELLEWSKESEYERLGLDQKMVKLLGVDLPLVQLPIFPGKNITAIIEVVALNFLLKHYAGYVPAEALTERIRNVINKERAKAPAPSTSFEEYNDEND.

Catalysis depends on residues H153 and K174. 168–175 (GKSGLGKS) provides a ligand contact to ATP. Position 175 (S175) interacts with Mg(2+). D192 serves as the catalytic Proton acceptor; for phosphorylation activity. Proton donor; for dephosphorylation activity. Positions 217-226 (MEIRGLGVVD) are important for the catalytic mechanism of both phosphorylation and dephosphorylation. Mg(2+) is bound at residue E218. The active site involves R259. The tract at residues 280-285 (PIFPGK) is important for the catalytic mechanism of dephosphorylation.

This sequence belongs to the HPrK/P family. In terms of assembly, homohexamer. Mg(2+) serves as cofactor.

It catalyses the reaction [HPr protein]-L-serine + ATP = [HPr protein]-O-phospho-L-serine + ADP + H(+). The catalysed reaction is [HPr protein]-O-phospho-L-serine + phosphate + H(+) = [HPr protein]-L-serine + diphosphate. In terms of biological role, catalyzes the ATP- as well as the pyrophosphate-dependent phosphorylation of a specific serine residue in HPr, a phosphocarrier protein of the phosphoenolpyruvate-dependent sugar phosphotransferase system (PTS). HprK/P also catalyzes the pyrophosphate-producing, inorganic phosphate-dependent dephosphorylation (phosphorolysis) of seryl-phosphorylated HPr (P-Ser-HPr). This is HPr kinase/phosphorylase from Chlorobaculum tepidum (strain ATCC 49652 / DSM 12025 / NBRC 103806 / TLS) (Chlorobium tepidum).